The chain runs to 164 residues: Ribosome-binding factor A (164 aa).

Belongs to the RbfA family. Monomer. Binds 30S ribosomal subunits, but not 50S ribosomal subunits or 70S ribosomes.

Its subcellular location is the cytoplasm. One of several proteins that assist in the late maturation steps of the functional core of the 30S ribosomal subunit. Associates with free 30S ribosomal subunits (but not with 30S subunits that are part of 70S ribosomes or polysomes). Required for efficient processing of 16S rRNA. May interact with the 5'-terminal helix region of 16S rRNA. The polypeptide is Ribosome-binding factor A (Mycobacterium leprae (strain Br4923)).